The primary structure comprises 801 residues: Elongation factor G, mitochondrial (801 aa).

The N-terminal 62 residues, 1–62 (MRTPTLARLP…LSKHFQQRRN (62 aa)), are a transit peptide targeting the mitochondrion. The tr-type G domain occupies 99 to 386 (SRVRNIGIAA…GVIDYLPNPS (288 aa)). GTP contacts are provided by residues 108–115 (AHIDSGKT), 184–188 (DTPGH), and 238–241 (NKMD).

It belongs to the TRAFAC class translation factor GTPase superfamily. Classic translation factor GTPase family. EF-G/EF-2 subfamily.

It localises to the mitochondrion. The protein operates within protein biosynthesis; polypeptide chain elongation. Functionally, mitochondrial GTPase that catalyzes the GTP-dependent ribosomal translocation step during translation elongation. During this step, the ribosome changes from the pre-translocational (PRE) to the post-translocational (POST) state as the newly formed A-site-bound peptidyl-tRNA and P-site-bound deacylated tRNA move to the P and E sites, respectively. Catalyzes the coordinated movement of the two tRNA molecules, the mRNA and conformational changes in the ribosome. The sequence is that of Elongation factor G, mitochondrial (mef1) from Aspergillus niger (strain ATCC MYA-4892 / CBS 513.88 / FGSC A1513).